We begin with the raw amino-acid sequence, 332 residues long: Homoserine kinase (332 aa).

This sequence belongs to the pseudomonas-type ThrB family.

It catalyses the reaction L-homoserine + ATP = O-phospho-L-homoserine + ADP + H(+). It participates in amino-acid biosynthesis; L-threonine biosynthesis; L-threonine from L-aspartate: step 4/5. This Burkholderia vietnamiensis (strain G4 / LMG 22486) (Burkholderia cepacia (strain R1808)) protein is Homoserine kinase.